Reading from the N-terminus, the 471-residue chain is Argininosuccinate lyase (471 aa).

This sequence belongs to the lyase 1 family. Argininosuccinate lyase subfamily.

It is found in the cytoplasm. The catalysed reaction is 2-(N(omega)-L-arginino)succinate = fumarate + L-arginine. Its pathway is amino-acid biosynthesis; L-arginine biosynthesis; L-arginine from L-ornithine and carbamoyl phosphate: step 3/3. The protein is Argininosuccinate lyase of Cereibacter sphaeroides (strain ATCC 17023 / DSM 158 / JCM 6121 / CCUG 31486 / LMG 2827 / NBRC 12203 / NCIMB 8253 / ATH 2.4.1.) (Rhodobacter sphaeroides).